Here is a 502-residue protein sequence, read N- to C-terminus: Glutamate--tRNA ligase (502 aa).

A 'HIGH' region motif is present at residues 9–19; sequence PSPTGFPHVGT. Residues 250-254 carry the 'KMSKS' region motif; the sequence is KLSKR. An ATP-binding site is contributed by K253.

Belongs to the class-I aminoacyl-tRNA synthetase family. Glutamate--tRNA ligase type 1 subfamily. In terms of assembly, monomer.

Its subcellular location is the cytoplasm. The catalysed reaction is tRNA(Glu) + L-glutamate + ATP = L-glutamyl-tRNA(Glu) + AMP + diphosphate. In terms of biological role, catalyzes the attachment of glutamate to tRNA(Glu) in a two-step reaction: glutamate is first activated by ATP to form Glu-AMP and then transferred to the acceptor end of tRNA(Glu). The protein is Glutamate--tRNA ligase of Acinetobacter baylyi (strain ATCC 33305 / BD413 / ADP1).